The following is a 256-amino-acid chain: Pimeloyl-[acyl-carrier protein] methyl ester esterase (256 aa).

The region spanning His15–Pro242 is the AB hydrolase-1 domain. Residues Trp22, Ser82–Leu83, and Phe143–Gln147 contribute to the substrate site. Ser82 serves as the catalytic Nucleophile. Residues Asp207 and His235 contribute to the active site. His235 contributes to the substrate binding site.

This sequence belongs to the AB hydrolase superfamily. Carboxylesterase BioH family. In terms of assembly, monomer.

The protein resides in the cytoplasm. It catalyses the reaction 6-carboxyhexanoyl-[ACP] methyl ester + H2O = 6-carboxyhexanoyl-[ACP] + methanol + H(+). The protein operates within cofactor biosynthesis; biotin biosynthesis. In terms of biological role, the physiological role of BioH is to remove the methyl group introduced by BioC when the pimeloyl moiety is complete. It allows to synthesize pimeloyl-ACP via the fatty acid synthetic pathway through the hydrolysis of the ester bonds of pimeloyl-ACP esters. This Escherichia coli O8 (strain IAI1) protein is Pimeloyl-[acyl-carrier protein] methyl ester esterase.